Reading from the N-terminus, the 638-residue chain is Threonine--tRNA ligase (638 aa).

The region spanning 1-59 is the TGS domain; sequence MEKIKVKIKGKEYEVEKGTPLGKIFELAGIKDALGGVINGKIIDLQTPVRESGEIKPVY. The interval 243–536 is catalytic; that stretch reads DHRRLGKELE…LLEHYAGLLP (294 aa). The Zn(2+) site is built by cysteine 336, histidine 387, and histidine 513.

The protein belongs to the class-II aminoacyl-tRNA synthetase family. In terms of assembly, homodimer. Requires Zn(2+) as cofactor.

It localises to the cytoplasm. It catalyses the reaction tRNA(Thr) + L-threonine + ATP = L-threonyl-tRNA(Thr) + AMP + diphosphate + H(+). In terms of biological role, catalyzes the attachment of threonine to tRNA(Thr) in a two-step reaction: L-threonine is first activated by ATP to form Thr-AMP and then transferred to the acceptor end of tRNA(Thr). Also edits incorrectly charged L-seryl-tRNA(Thr). The sequence is that of Threonine--tRNA ligase from Aquifex aeolicus (strain VF5).